The following is a 143-amino-acid chain: Transcriptional regulator MraZ (143 aa).

2 SpoVT-AbrB domains span residues 5-47 (EYSH…PMPV) and 76-119 (AMEA…SDEN).

The protein belongs to the MraZ family. In terms of assembly, forms oligomers.

The protein localises to the cytoplasm. Its subcellular location is the nucleoid. In Leuconostoc citreum (strain KM20), this protein is Transcriptional regulator MraZ.